A 158-amino-acid polypeptide reads, in one-letter code: NAD(P)H-quinone oxidoreductase subunit J, chloroplastic (158 aa).

Belongs to the complex I 30 kDa subunit family. NDH is composed of at least 16 different subunits, 5 of which are encoded in the nucleus.

The protein localises to the plastid. It is found in the chloroplast thylakoid membrane. The enzyme catalyses a plastoquinone + NADH + (n+1) H(+)(in) = a plastoquinol + NAD(+) + n H(+)(out). The catalysed reaction is a plastoquinone + NADPH + (n+1) H(+)(in) = a plastoquinol + NADP(+) + n H(+)(out). Its function is as follows. NDH shuttles electrons from NAD(P)H:plastoquinone, via FMN and iron-sulfur (Fe-S) centers, to quinones in the photosynthetic chain and possibly in a chloroplast respiratory chain. The immediate electron acceptor for the enzyme in this species is believed to be plastoquinone. Couples the redox reaction to proton translocation, and thus conserves the redox energy in a proton gradient. This is NAD(P)H-quinone oxidoreductase subunit J, chloroplastic from Amborella trichopoda.